The sequence spans 93 residues: RNA-binding protein Hfq (93 aa).

The region spanning 9-68 (DPFLNALRKERIPVSIFLVNGIKLQGQIESFDQYVVLLKNAVSQMVYKHAISTVVPARNP) is the Sm domain. Over residues 74–86 (PAMAAGATAAPAA) the composition is skewed to low complexity. The tract at residues 74–93 (PAMAAGATAAPAADEGYGNQ) is disordered.

This sequence belongs to the Hfq family. As to quaternary structure, homohexamer.

Its function is as follows. RNA chaperone that binds small regulatory RNA (sRNAs) and mRNAs to facilitate mRNA translational regulation in response to envelope stress, environmental stress and changes in metabolite concentrations. Also binds with high specificity to tRNAs. The sequence is that of RNA-binding protein Hfq from Alcanivorax borkumensis (strain ATCC 700651 / DSM 11573 / NCIMB 13689 / SK2).